The sequence spans 708 residues: Metal-pseudopaline receptor CntO (708 aa).

Positions 1–21 are cleaved as a signal peptide; it reads MRVSVSLVLGVGLGCSSPALW. The 107-residue stretch at 63–169 folds into the TBDR plug domain; it reads RIEDIPQAIS…PGGTVNLVTK (107 aa). Residues 174–708 enclose the TBDR beta-barrel domain; that stretch reads ERFARLHASA…NLTMSLTLNY (535 aa).

It belongs to the TonB-dependent receptor family.

The protein resides in the cell outer membrane. Its function is as follows. Transports the metallophore pseudopaline, which is involved in the acquisition of nickel and zinc, and thus enables bacterial growth inside the host, where metal access is limited. Is probably involved in the import of pseudopaline-metal complexes. In Pseudomonas aeruginosa (strain UCBPP-PA14), this protein is Metal-pseudopaline receptor CntO.